The sequence spans 120 residues: Large ribosomal subunit protein uL18 (120 aa).

Belongs to the universal ribosomal protein uL18 family. Part of the 50S ribosomal subunit; part of the 5S rRNA/L5/L18/L25 subcomplex. Contacts the 5S and 23S rRNAs.

This is one of the proteins that bind and probably mediate the attachment of the 5S RNA into the large ribosomal subunit, where it forms part of the central protuberance. This Rhodopseudomonas palustris (strain BisA53) protein is Large ribosomal subunit protein uL18.